The chain runs to 201 residues: Holliday junction branch migration complex subunit RuvA (201 aa).

Residues 1–64 (MYEYIRGQFQ…EDFIGLYGFT (64 aa)) form a domain I region. The domain II stretch occupies residues 65–143 (TKEELEMFKL…PDELTSEEEQ (79 aa)). The flexible linker stretch occupies residues 144-152 (LIEGINDNS). The tract at residues 153-201 (DYSFNINETLSALMALGYTEKEAQKALEKVDKTLSIENMIKESLKLLMR) is domain III.

It belongs to the RuvA family. In terms of assembly, homotetramer. Forms an RuvA(8)-RuvB(12)-Holliday junction (HJ) complex. HJ DNA is sandwiched between 2 RuvA tetramers; dsDNA enters through RuvA and exits via RuvB. An RuvB hexamer assembles on each DNA strand where it exits the tetramer. Each RuvB hexamer is contacted by two RuvA subunits (via domain III) on 2 adjacent RuvB subunits; this complex drives branch migration. In the full resolvosome a probable DNA-RuvA(4)-RuvB(12)-RuvC(2) complex forms which resolves the HJ.

It localises to the cytoplasm. Its function is as follows. The RuvA-RuvB-RuvC complex processes Holliday junction (HJ) DNA during genetic recombination and DNA repair, while the RuvA-RuvB complex plays an important role in the rescue of blocked DNA replication forks via replication fork reversal (RFR). RuvA specifically binds to HJ cruciform DNA, conferring on it an open structure. The RuvB hexamer acts as an ATP-dependent pump, pulling dsDNA into and through the RuvAB complex. HJ branch migration allows RuvC to scan DNA until it finds its consensus sequence, where it cleaves and resolves the cruciform DNA. The protein is Holliday junction branch migration complex subunit RuvA of Clostridium perfringens (strain SM101 / Type A).